The following is an 88-amino-acid chain: LYR motif-containing protein 2 (88 aa).

Residues 1 to 19 (MAASRLPPATLTLKQFVRR) constitute a mitochondrion transit peptide.

This sequence belongs to the complex I LYR family.

The protein localises to the mitochondrion. Involved in efficient integration of the N-module into mitochondrial respiratory chain complex I. The protein is LYR motif-containing protein 2 (LYRM2) of Pongo abelii (Sumatran orangutan).